The following is a 184-amino-acid chain: UPF0149 protein Avin_47340 (184 aa).

The protein belongs to the UPF0149 family.

The protein is UPF0149 protein Avin_47340 of Azotobacter vinelandii (strain DJ / ATCC BAA-1303).